A 408-amino-acid polypeptide reads, in one-letter code: UDP-N-acetylglucosamine--dolichyl-phosphate N-acetylglucosaminephosphotransferase (408 aa).

2 helical membrane passes run serine 6–proline 26 and tryptophan 32–isoleucine 52. 2 residues coordinate UDP-N-acetyl-alpha-D-glucosamine: aspartate 68 and glutamate 84. Helical transmembrane passes span glycine 87 to phenylalanine 107 and alanine 120 to leucine 140. Lysine 145 lines the dolichyl phosphate pocket. Helical transmembrane passes span isoleucine 147–valine 167 and leucine 181–phenylalanine 201. Residue isoleucine 200–isoleucine 208 coordinates dolichyl phosphate. Asparagine 207 serves as a coordination point for Mg(2+). A UDP-N-acetyl-alpha-D-glucosamine-binding site is contributed by asparagine 213. 2 helical membrane-spanning segments follow: residues valine 221–valine 241 and histidine 258–tyrosine 278. Residue aspartate 289 participates in Mg(2+) binding. A helical membrane pass occupies residues methionine 297–isoleucine 317. Arginine 338 to arginine 340 serves as a coordination point for UDP-N-acetyl-alpha-D-glucosamine. A run of 2 helical transmembrane segments spans residues methionine 351–leucine 371 and leucine 376–tyrosine 396.

Belongs to the glycosyltransferase 4 family. As to quaternary structure, homodimer. It depends on Mg(2+) as a cofactor.

Its subcellular location is the endoplasmic reticulum membrane. It carries out the reaction a di-trans,poly-cis-dolichyl phosphate + UDP-N-acetyl-alpha-D-glucosamine = an N-acetyl-alpha-D-glucosaminyl-diphospho-di-trans,poly-cis-dolichol + UMP. It functions in the pathway protein modification; protein glycosylation. Inhibited by natural nucleoside antibiotic tunicamycin, which acts as a structural analog and competitor of UDP-GlcNAc. Its function is as follows. UDP-N-acetylglucosamine--dolichyl-phosphate N-acetylglucosaminephosphotransferase that operates in the biosynthetic pathway of dolichol-linked oligosaccharides, the glycan precursors employed in protein asparagine (N)-glycosylation. The assembly of dolichol-linked oligosaccharides begins on the cytosolic side of the endoplasmic reticulum membrane and finishes in its lumen. The sequential addition of sugars to dolichol pyrophosphate produces dolichol-linked oligosaccharides containing fourteen sugars, including two GlcNAcs, nine mannoses and three glucoses. Once assembled, the oligosaccharide is transferred from the lipid to nascent proteins by oligosaccharyltransferases. Catalyzes the initial step of dolichol-linked oligosaccharide biosynthesis, transfering GlcNAc-1-P from cytosolic UDP-GlcNAc onto the carrier lipid dolichyl phosphate (P-dolichol), yielding GlcNAc-P-P-dolichol embedded in the cytoplasmic leaflet of the endoplasmic reticulum membrane. The protein is UDP-N-acetylglucosamine--dolichyl-phosphate N-acetylglucosaminephosphotransferase (alg7) of Dictyostelium discoideum (Social amoeba).